We begin with the raw amino-acid sequence, 228 residues long: Endo-1,4-beta-xylanase A (228 aa).

Positions 1–27 (MNLRKLRLLFVMCIGLTLILTAVPAHA) are cleaved as a signal peptide. One can recognise a GH11 domain in the interval 29-222 (TITNNEMGNH…SSGSANVMTN (194 aa)). The Nucleophile role is filled by glutamate 120. The Proton donor role is filled by glutamate 209.

It belongs to the glycosyl hydrolase 11 (cellulase G) family.

The enzyme catalyses Endohydrolysis of (1-&gt;4)-beta-D-xylosidic linkages in xylans.. It functions in the pathway glycan degradation; xylan degradation. This Bacillus pumilus (Bacillus mesentericus) protein is Endo-1,4-beta-xylanase A (xynA).